A 352-amino-acid polypeptide reads, in one-letter code: Cyclin-dependent kinase-like 1 (352 aa).

The 284-residue stretch at 4 to 287 (YEKIGKIGEG…CEQLLQHPYF (284 aa)) folds into the Protein kinase domain. Residues 10–18 (IGEGSYGVV) and Lys33 contribute to the ATP site. The [NKR]KIAxRE signature appears at 45–51 (KKIALRE). Asp126 (proton acceptor) is an active-site residue.

It belongs to the protein kinase superfamily. CMGC Ser/Thr protein kinase family. CDC2/CDKX subfamily.

It localises to the cytoplasm. The protein localises to the nucleus. It catalyses the reaction L-seryl-[protein] + ATP = O-phospho-L-seryl-[protein] + ADP + H(+). It carries out the reaction L-threonyl-[protein] + ATP = O-phospho-L-threonyl-[protein] + ADP + H(+). This Mus musculus (Mouse) protein is Cyclin-dependent kinase-like 1.